Consider the following 160-residue polypeptide: H/ACA ribonucleoprotein complex subunit 2-like protein (160 aa).

This sequence belongs to the eukaryotic ribosomal protein eL8 family. As to quaternary structure, component of the small nucleolar ribonucleoprotein particle containing H/ACA-type snoRNAs (H/ACA snoRNPs).

The protein localises to the nucleus. Its subcellular location is the nucleolus. In terms of biological role, required for ribosome biogenesis. Part of a complex which catalyzes pseudouridylation of rRNA. This involves the isomerization of uridine such that the ribose is subsequently attached to C5, instead of the normal N1. Pseudouridine ('psi') residues may serve to stabilize the conformation of rRNAs. The chain is H/ACA ribonucleoprotein complex subunit 2-like protein (NHP2) from Drosophila yakuba (Fruit fly).